The sequence spans 201 residues: Homeobox protein ceh-28 (201 aa).

Polar residues predominate over residues 72–84 (SYYSSPSQNQRSY). The tract at residues 72–94 (SYYSSPSQNQRSYQNHRQHSNPD) is disordered. A DNA-binding region (homeobox) is located at residues 104 to 163 (KRKPRVLFTQHQVNELEERFKKQRYVTATEREELAQCLGLTATQVKIWFQNRRYKCKRLA).

This sequence belongs to the NK-2 homeobox family.

It is found in the nucleus. Functionally, probable transcription factor that regulates neuronal differention, including synapse assembly of the cholinergic motor neuron M4. Activates expression of growth factor, neuropeptide and transcription factor genes, such as TGF-beta dbl-1, FMRFamide-like flp-5 and transcription repressor zag-1, in the M4 neuron. Required for pharynx peristalsis. This is Homeobox protein ceh-28 from Caenorhabditis elegans.